Here is a 381-residue protein sequence, read N- to C-terminus: 1-deoxy-D-xylulose 5-phosphate reductoisomerase (381 aa).

The NADPH site is built by Thr-10, Gly-11, Ser-12, Ile-13, Asn-38, and Asn-121. 1-deoxy-D-xylulose 5-phosphate is bound at residue Lys-122. Glu-123 provides a ligand contact to NADPH. Residue Asp-147 participates in Mn(2+) binding. Residues Ser-148, Glu-149, Ser-173, and His-196 each coordinate 1-deoxy-D-xylulose 5-phosphate. A Mn(2+)-binding site is contributed by Glu-149. Residue Gly-202 coordinates NADPH. Residues Ser-209, Asn-214, Lys-215, and Glu-218 each coordinate 1-deoxy-D-xylulose 5-phosphate. Glu-218 serves as a coordination point for Mn(2+).

Belongs to the DXR family. The cofactor is Mg(2+). Mn(2+) is required as a cofactor.

It carries out the reaction 2-C-methyl-D-erythritol 4-phosphate + NADP(+) = 1-deoxy-D-xylulose 5-phosphate + NADPH + H(+). Its pathway is isoprenoid biosynthesis; isopentenyl diphosphate biosynthesis via DXP pathway; isopentenyl diphosphate from 1-deoxy-D-xylulose 5-phosphate: step 1/6. Catalyzes the NADPH-dependent rearrangement and reduction of 1-deoxy-D-xylulose-5-phosphate (DXP) to 2-C-methyl-D-erythritol 4-phosphate (MEP). This chain is 1-deoxy-D-xylulose 5-phosphate reductoisomerase, found in Alkaliphilus oremlandii (strain OhILAs) (Clostridium oremlandii (strain OhILAs)).